The following is a 141-amino-acid chain: Nucleoside diphosphate kinase (141 aa).

Lysine 11, phenylalanine 59, arginine 87, threonine 93, arginine 104, and asparagine 114 together coordinate ATP. Histidine 117 (pros-phosphohistidine intermediate) is an active-site residue.

This sequence belongs to the NDK family. Mg(2+) serves as cofactor.

The protein resides in the cytoplasm. The catalysed reaction is a 2'-deoxyribonucleoside 5'-diphosphate + ATP = a 2'-deoxyribonucleoside 5'-triphosphate + ADP. It catalyses the reaction a ribonucleoside 5'-diphosphate + ATP = a ribonucleoside 5'-triphosphate + ADP. Major role in the synthesis of nucleoside triphosphates other than ATP. The ATP gamma phosphate is transferred to the NDP beta phosphate via a ping-pong mechanism, using a phosphorylated active-site intermediate. The polypeptide is Nucleoside diphosphate kinase (Staphylothermus marinus (strain ATCC 43588 / DSM 3639 / JCM 9404 / F1)).